We begin with the raw amino-acid sequence, 111 residues long: Disintegrin DS-AS (111 aa).

The signal sequence occupies residues 1–20 (MIQVLLVIICLAVFPYQGSC). A propeptide spanning residues 21–47 (IILESGNVNDYEIVYPKKLIVLPTGAM) is cleaved from the precursor. One can recognise a Disintegrin domain in the interval 47–111 (MNSPHPCCDP…PDCPRNPYKD (65 aa)). 4 disulfides stabilise this stretch: Cys-53/Cys-76, Cys-67/Cys-73, Cys-72/Cys-97, and Cys-85/Cys-104. A Cell attachment site motif is present at residues 89–91 (RGD).

As to quaternary structure, heterodimer; disulfide-linked.

Its subcellular location is the secreted. Its function is as follows. Inhibits ADP-induced platelet aggregation in human platelet-rich plasma (IC(50) is 8 uM). The chain is Disintegrin DS-AS from Atheris squamigera (Variable bush viper).